Reading from the N-terminus, the 312-residue chain is MATERDGGGCLRVAVSIFSIYYWLSALGHVFLGLWMLLDPKRNYILDLVHFSENDPLLKASAYVSLVCGCAQLLVGFLGLCGAVNRSRFLLLAFVMFLIGTFLADVAMGTLSLFYKDKFSNNYMGVYLKNLTYNRYSRDRWVLPLMDTIQFYVYSVKENVREIVKSKYGVMTSEPENKMVTEFIDKLQFYEKCCGSLGPTDYISSRWSQSTNQDSEEIESPLFPVSCCTQITGASALNPLAKSYARCQQIGANRQWRHAVGCSERLMSWFNEQIWIFVGFGFGSALTMMLGICLSCCLISKIRIYHVIRDDY.

A run of 4 helical transmembrane segments spans residues 17-37, 64-84, 89-109, and 274-294; these read IFSIYYWLSALGHVFLGLWML, VSLVCGCAQLLVGFLGLCGAV, FLLLAFVMFLIGTFLADVAMG, and IWIFVGFGFGSALTMMLGICL.

This sequence belongs to the tetraspanin (TM4SF) family. As to expression, expressed in dopaminergic neurons, head muscles, vulva and spermatheca.

It localises to the cell membrane. The protein resides in the cell projection. It is found in the dendrite. The protein localises to the axon. In terms of biological role, protects dopaminergic neurons against oxidative stress-induced neurodegeneration. May act partly via dopamine receptor dop-2 to negatively regulate dopamine reuptake transporter dat-1 activity. Also plays a role in modulating behaviors linked to dopamine signaling. Confers protection against oxidative stress in the whole body. This chain is Tetraspanin-17, found in Caenorhabditis elegans.